The following is a 301-amino-acid chain: MTSRRSVKSGPREVPRDEYEDLYYTPSSGMASPDSPPDTSRRGALQTRSRQRGEVRFVQYDESDYALYGGSSSEDDEHPEVPRTRRPVSGAVLSGPGPARAPPPPAGSGGAGRTPTTAPRAPRTQRVATKAPAAPAAETTRGRKSAQPESAALPDAPASTAPTRSKTPAQGLARKLHFSTAPPNPDAPWTPRVAGFNKRVFCAAVGRLAAMHARMAAVQLWDMSRPRTDEDLNELLGITTIRVTVCEGKNLLQRANELVNPDVVQDVDAATATRGRSAASRPTERPRAPARSASRPRRPVE.

Positions 1 to 171 (MTSRRSVKSG…PTRSKTPAQG (171 aa)) are disordered. Positions 113 to 124 (RTPTTAPRAPRT) are enriched in low complexity. Positions 163–166 (TRSK) match the Nuclear localization signal motif. Residues 174 to 267 (RKLHFSTAPP…LVNPDVVQDV (94 aa)) form an interaction with gE region. The short motif at 232–244 (LNELLGITTIRVT) is the Nuclear export signal element. Residues 269–281 (AATATRGRSAASR) are compositionally biased toward low complexity. Residues 269–301 (AATATRGRSAASRPTERPRAPARSASRPRRPVE) form a disordered region.

Belongs to the alphaherpesvirinae VP22 tegument protein family. As to quaternary structure, interacts with gE (via C-terminus); this interaction is necessary for the recruitment of VP22 to the Golgi and its packaging into virions. Interacts with gM (via C-terminus). Interacts with VP16; this interaction allows the formation of a tripartite complex composed of VP16, VP22 and UL41/VHS. According to a report interacts with gD (via C-terminus). According another publication, does not interact with gD. Interacts with host CGAS. Interacts with host SET; this interaction may interfere with SET-mediated nucleosomal deposition onto the viral genome. Interacts with the capsid-binding protein UL16. Post-translationally, highly phosphorylated in the host cell. Packaging is selective for underphosphorylated forms.

It localises to the virion tegument. It is found in the host cytoplasm. The protein localises to the host nucleus. Its subcellular location is the host Golgi apparatus. Functionally, tegument protein that plays different roles during the time course of infection. Participates in both the accumulation of viral mRNAs and viral protein translation at late time of infection. Modulates the RNase activity of the virion host shutoff protein UL41 probably to ensure necessary levels of key cellular mRNAs and proteins. Plays a role in microtubule reorganization that occurs after viral infection by stabilizing microtubule network. Finally, may prevent nucleosomal deposition onto the viral genome by interacting with and inhibiting host SET. Plays a role in the inhibition of host innate immune system by targeting the CGAS enzymatic activity which is the principal cytosolic DNA sensor that detects invading viral DNA. Acts by mediating disruption of liquid-like droplets in which CGAS is activated, thereby preventing CGAS activity. This Human herpesvirus 1 (strain 17) (HHV-1) protein is Tegument protein VP22.